The chain runs to 431 residues: Serine--tRNA ligase (431 aa).

The disordered stretch occupies residues 41–66 (QSRTQELQAERNARSKSIGEAARRGE). 240–242 (TSE) contacts L-serine. 271 to 273 (RSE) is a binding site for ATP. Residue Glu294 participates in L-serine binding. Position 358 to 361 (358 to 361 (EISS)) interacts with ATP. Ser392 lines the L-serine pocket.

The protein belongs to the class-II aminoacyl-tRNA synthetase family. Type-1 seryl-tRNA synthetase subfamily. In terms of assembly, homodimer. The tRNA molecule binds across the dimer.

It is found in the cytoplasm. It carries out the reaction tRNA(Ser) + L-serine + ATP = L-seryl-tRNA(Ser) + AMP + diphosphate + H(+). The catalysed reaction is tRNA(Sec) + L-serine + ATP = L-seryl-tRNA(Sec) + AMP + diphosphate + H(+). It functions in the pathway aminoacyl-tRNA biosynthesis; selenocysteinyl-tRNA(Sec) biosynthesis; L-seryl-tRNA(Sec) from L-serine and tRNA(Sec): step 1/1. Its function is as follows. Catalyzes the attachment of serine to tRNA(Ser). Is also able to aminoacylate tRNA(Sec) with serine, to form the misacylated tRNA L-seryl-tRNA(Sec), which will be further converted into selenocysteinyl-tRNA(Sec). In Aeromonas hydrophila subsp. hydrophila (strain ATCC 7966 / DSM 30187 / BCRC 13018 / CCUG 14551 / JCM 1027 / KCTC 2358 / NCIMB 9240 / NCTC 8049), this protein is Serine--tRNA ligase.